The sequence spans 264 residues: MSVSVNIENLTKEYRIYRNNKDRIKDALIPKNKNKTFYALDNVSLTAHEGDVIGLVGINGSGKSTLSNMIGGSISPSSGEITRHGDVSVIAINAGLNGQLTGVENIEFKMLCMGFKRKEIKKLMPEIIEFSELGEFIYQPVKKYSSGMRAKLGFSINITVNPDILVIDEALSVGDQTFTQKCLDKIYEFKAAKKTIFFVSHNIRQVREFCTKIAWIEGGKLKEFGELEEVLPDYEAFLKTFKKKSKAEQKEFRNKLDESRFVVK.

The ABC transporter domain occupies 24–243 (IKDALIPKNK…YEAFLKTFKK (220 aa)). ATP is bound at residue 57–64 (GINGSGKS).

Belongs to the ABC transporter superfamily. Teichoic acids exporter (TC 3.A.1.104.1) family. In terms of assembly, the complex is composed of two ATP-binding proteins (TagH) and two transmembrane proteins (TagG).

It localises to the cell membrane. The enzyme catalyses ATP + H2O + teichoic acidSide 1 = ADP + phosphate + teichoic acidSide 2.. In terms of biological role, part of the ABC transporter complex TagGH involved in teichoic acids export. Responsible for energy coupling to the transport system. The protein is Teichoic acids export ATP-binding protein TagH of Staphylococcus epidermidis (strain ATCC 35984 / DSM 28319 / BCRC 17069 / CCUG 31568 / BM 3577 / RP62A).